Here is a 345-residue protein sequence, read N- to C-terminus: S-adenosylmethionine:tRNA ribosyltransferase-isomerase (345 aa).

This sequence belongs to the QueA family. Monomer.

It localises to the cytoplasm. The enzyme catalyses 7-aminomethyl-7-carbaguanosine(34) in tRNA + S-adenosyl-L-methionine = epoxyqueuosine(34) in tRNA + adenine + L-methionine + 2 H(+). It functions in the pathway tRNA modification; tRNA-queuosine biosynthesis. Transfers and isomerizes the ribose moiety from AdoMet to the 7-aminomethyl group of 7-deazaguanine (preQ1-tRNA) to give epoxyqueuosine (oQ-tRNA). This Anaeromyxobacter dehalogenans (strain 2CP-1 / ATCC BAA-258) protein is S-adenosylmethionine:tRNA ribosyltransferase-isomerase.